Consider the following 392-residue polypeptide: Rhizopuspepsin-5 (392 aa).

Residues 1 to 21 form the signal peptide; that stretch reads MKFSLISSCVALAVLVLSTEA. The propeptide at 22 to 69 is activation peptide; it reads APNGKKVNIPLTKNKDYKPNAKNAIQKVLAKYHRHRSTSSSSNSTSTD. The Peptidase A1 domain maps to 85–389; it reads YFGQVKVGTP…NPTVPQVQIA (305 aa). D103 is an active-site residue. C116 and C119 are oxidised to a cystine. Residue D286 is part of the active site. Residues C320 and C353 are joined by a disulfide bond.

The protein belongs to the peptidase A1 family.

The catalysed reaction is Hydrolysis of proteins with broad specificity similar to that of pepsin A, preferring hydrophobic residues at P1 and P1'. Clots milk and activates trypsinogen. Does not cleave 4-Gln-|-His-5, but does cleave 10-His-|-Leu-11 and 12-Val-|-Glu-13 in B chain of insulin.. The sequence is that of Rhizopuspepsin-5 from Rhizopus niveus.